Reading from the N-terminus, the 309-residue chain is 4-hydroxy-3-methylbut-2-enyl diphosphate reductase (309 aa).

Cys-13 serves as a coordination point for [4Fe-4S] cluster. Residues His-42 and His-75 each contribute to the (2E)-4-hydroxy-3-methylbut-2-enyl diphosphate site. Dimethylallyl diphosphate is bound by residues His-42 and His-75. Isopentenyl diphosphate contacts are provided by His-42 and His-75. Cys-97 serves as a coordination point for [4Fe-4S] cluster. His-125 is a binding site for (2E)-4-hydroxy-3-methylbut-2-enyl diphosphate. His-125 serves as a coordination point for dimethylallyl diphosphate. His-125 is a binding site for isopentenyl diphosphate. Residue Glu-127 is the Proton donor of the active site. Thr-165 contributes to the (2E)-4-hydroxy-3-methylbut-2-enyl diphosphate binding site. [4Fe-4S] cluster is bound at residue Cys-195. Residues Ser-223, Ser-224, Asn-225, and Ser-267 each contribute to the (2E)-4-hydroxy-3-methylbut-2-enyl diphosphate site. Residues Ser-223, Ser-224, Asn-225, and Ser-267 each coordinate dimethylallyl diphosphate. The isopentenyl diphosphate site is built by Ser-223, Ser-224, Asn-225, and Ser-267.

It belongs to the IspH family. [4Fe-4S] cluster is required as a cofactor.

The catalysed reaction is isopentenyl diphosphate + 2 oxidized [2Fe-2S]-[ferredoxin] + H2O = (2E)-4-hydroxy-3-methylbut-2-enyl diphosphate + 2 reduced [2Fe-2S]-[ferredoxin] + 2 H(+). It catalyses the reaction dimethylallyl diphosphate + 2 oxidized [2Fe-2S]-[ferredoxin] + H2O = (2E)-4-hydroxy-3-methylbut-2-enyl diphosphate + 2 reduced [2Fe-2S]-[ferredoxin] + 2 H(+). Its pathway is isoprenoid biosynthesis; dimethylallyl diphosphate biosynthesis; dimethylallyl diphosphate from (2E)-4-hydroxy-3-methylbutenyl diphosphate: step 1/1. It functions in the pathway isoprenoid biosynthesis; isopentenyl diphosphate biosynthesis via DXP pathway; isopentenyl diphosphate from 1-deoxy-D-xylulose 5-phosphate: step 6/6. Catalyzes the conversion of 1-hydroxy-2-methyl-2-(E)-butenyl 4-diphosphate (HMBPP) into a mixture of isopentenyl diphosphate (IPP) and dimethylallyl diphosphate (DMAPP). Acts in the terminal step of the DOXP/MEP pathway for isoprenoid precursor biosynthesis. The sequence is that of 4-hydroxy-3-methylbut-2-enyl diphosphate reductase from Chlamydia felis (strain Fe/C-56) (Chlamydophila felis).